A 256-amino-acid polypeptide reads, in one-letter code: uncharacterized protein (256 aa).

Positions 211–256 are disordered; sequence RKLQASVTTTPPKRCKLADRPAQTTQDTPRAPQPAPVRAQRPLFTL. Low complexity predominate over residues 246–256; it reads PVRAQRPLFTL.

This is an uncharacterized protein from Orgyia pseudotsugata (Douglas-fir tussock moth).